The following is a 726-amino-acid chain: MSTTDDTHNTLSTGKCPFHQGGHDRSAGAGTASRDWWPNQLRVDLLNQHSNRSNPLGEDFDYRKEFSKLDYSALKGDLKALLTDSQPWWPADWGSYVGLFIRMAWHGAGTYRSIDGRGGAGRGQQRFAPLNSWPDNVSLDKARRLLWPIKQKYGQKISWADLFILAGNVALENSGFRTFGFGAGREDVWEPDLDVNWGDEKAWLTHRHPEALAKAPLGATEMGLIYVNPEGPDHSGEPLSAAAAIRATFGNMGMNDEETVALIAGGHTLGKTHGAAAASHVGADPEAAPIEAQGLGWASSYGSGVGADAITSGLEVVWTQTPTQWSNYFFENLFKYEWVQTRSPAGAIQFEAVDAPDIIPDPFDPSKKRKPTMLVTDLTLRFDPEFEKISRRFLNDPQAFNEAFARAWFKLTHRDMGPKARYIGPEVPKEDLIWQDPLPQPLYQPTQEDIINLKAAIAASGLSISEMVSVAWASASTFRGGDKRGGANGARLALAPQRDWDVNAVAARVLPVLEEIQKTTNKASLADIIVLAGVVGIEQAAAAAGVSISVPFAPGRVDARQDQTDIEMFSLLEPIADGFRNYRARLDVSTTESLLIDKAQQLTLTAPEMTVLVGGMRVLGTNFDGSQNGVFTDRPGVLSTDFFANLLDMRYEWKPTDDANELFEGRDRLTGEVKYTATRADLVFGSNSVLRALAEVYACSDAHEKFVKDFVAAWVKVMNLDRFDLQ.

Residues M1–S33 form a disordered region. A cross-link (tryptophyl-tyrosyl-methioninium (Trp-Tyr) (with M-252)) is located at residues W105–Y226. H106 (proton acceptor) is an active-site residue. Positions Y226–M252 form a cross-link, tryptophyl-tyrosyl-methioninium (Tyr-Met) (with W-105). Residue H267 coordinates heme b.

It belongs to the peroxidase family. Peroxidase/catalase subfamily. Homodimer or homotetramer. Heme b is required as a cofactor. In terms of processing, formation of the three residue Trp-Tyr-Met cross-link is important for the catalase, but not the peroxidase activity of the enzyme.

The catalysed reaction is H2O2 + AH2 = A + 2 H2O. It catalyses the reaction 2 H2O2 = O2 + 2 H2O. Functionally, bifunctional enzyme with both catalase and broad-spectrum peroxidase activity. This is Catalase-peroxidase from Salmonella heidelberg (strain SL476).